Here is a 433-residue protein sequence, read N- to C-terminus: L-saccharopine oxidase (433 aa).

Residues 1–18 form the signal peptide; it reads MSRTIVIVGCGVFGLSTA. N-linked (GlcNAc...) asparagine glycosylation is found at Asn-24, Asn-119, Asn-188, and Asn-229.

This sequence belongs to the MSOX/MTOX family. As to quaternary structure, monomer. The cofactor is FAD.

It localises to the secreted. It is found in the cytoplasm. The protein resides in the nucleus. It carries out the reaction L-saccharopine + O2 + H2O = (S)-2-amino-6-oxohexanoate + L-glutamate + H2O2. The chain is L-saccharopine oxidase from Schizosaccharomyces pombe (strain 972 / ATCC 24843) (Fission yeast).